The following is a 257-amino-acid chain: AN1-type zinc finger protein 2B (257 aa).

2 AN1-type zinc fingers span residues 4 to 52 (PDLG…QKDI) and 94 to 142 (KIFT…HPTS). Residues C10, C15, C25, C28, C33, H36, H42, C44, C100, C105, C115, C118, C123, H126, H132, and C134 each contribute to the Zn(2+) site. The tract at residues 141–151 (TSRAGLAAISR) is VCP/p97-interacting motif (VIM). The segment at 153 to 187 (QGLASTSTVPSPSRTLPSSSSPSRATPQLPPRTTS) is disordered. The span at 156–179 (ASTSTVPSPSRTLPSSSSPSRATP) shows a compositional bias: low complexity. Phosphoserine occurs at positions 163, 173, and 187. 2 UIM domains span residues 197–216 (SEDEALQRALELSLAEAKPQ) and 221–240 (QEEEDLALAQALSASEAEYQ). Residue C254 is modified to Cysteine methyl ester. C254 is lipidated: S-geranylgeranyl cysteine. Residues 254–257 (CSLC) carry the CAAX motif motif. Positions 255 to 257 (SLC) are cleaved as a propeptide — removed in mature form.

Binds 'Lys-48'-linked polyubiquitin chains of ubiquitinated proteins. Associates with the proteasome complex; upon exposure to arsenite. Interacts (via VIM motif) with VCP; the interaction is direct. Interacts with BAG6. Interacts with IGF1R (nascent precursor form). Interacts with DERL1, FAF2, NPLOC4 and UFD1; probably through VCP. In terms of processing, phosphorylated by MAPK14. Phosphorylation has no effect on association with the proteasome complex.

The protein resides in the endoplasmic reticulum membrane. Its function is as follows. Plays a role in protein homeostasis by regulating both the translocation and the ubiquitin-mediated proteasomal degradation of nascent proteins at the endoplasmic reticulum. It is involved in the regulation of signal-mediated translocation of proteins into the endoplasmic reticulum. It also plays a role in the ubiquitin-mediated proteasomal degradation of proteins for which signal-mediated translocation to the endoplasmic reticulum has failed. May therefore function in the endoplasmic reticulum stress-induced pre-emptive quality control, a mechanism that selectively attenuates the translocation of newly synthesized proteins into the endoplasmic reticulum and reroutes them to the cytosol for proteasomal degradation. By controlling the steady-state expression of the IGF1R receptor, indirectly regulates the insulin-like growth factor receptor signaling pathway. This Rattus norvegicus (Rat) protein is AN1-type zinc finger protein 2B.